The following is a 375-amino-acid chain: Dual specificity protein phosphatase 4 (375 aa).

The region spanning 25-143 (SGGRCLLLDC…FASEYPEFCA (119 aa)) is the Rhodanese domain. The 142-residue stretch at 176 to 317 (GPVEILPFLY…LLQFESQVLA (142 aa)) folds into the Tyrosine-protein phosphatase domain. Catalysis depends on cysteine 261, which acts as the Phosphocysteine intermediate.

The protein belongs to the protein-tyrosine phosphatase family. Non-receptor class dual specificity subfamily.

It is found in the nucleus. It catalyses the reaction O-phospho-L-tyrosyl-[protein] + H2O = L-tyrosyl-[protein] + phosphate. The catalysed reaction is O-phospho-L-seryl-[protein] + H2O = L-seryl-[protein] + phosphate. It carries out the reaction O-phospho-L-threonyl-[protein] + H2O = L-threonyl-[protein] + phosphate. Its function is as follows. Regulates mitogenic signal transduction by dephosphorylating both Thr and Tyr residues on MAP kinases ERK1 and ERK2. The chain is Dual specificity protein phosphatase 4 (DUSP4) from Gallus gallus (Chicken).